The following is a 521-amino-acid chain: uncharacterized protein (521 aa).

This is an uncharacterized protein from Magallana gigas (Pacific oyster).